Reading from the N-terminus, the 310-residue chain is Ribonuclease HIII (310 aa).

The 217-residue stretch at 90-306 folds into the RNase H type-2 domain; sequence FQCIGSDEAG…RKKAENLVQK (217 aa). A divalent metal cation-binding residues include Asp96, Glu97, and Asp201.

The protein belongs to the RNase HII family. RnhC subfamily. Requires Mn(2+) as cofactor. The cofactor is Mg(2+).

It localises to the cytoplasm. The enzyme catalyses Endonucleolytic cleavage to 5'-phosphomonoester.. Its function is as follows. Endonuclease that specifically degrades the RNA of RNA-DNA hybrids. The sequence is that of Ribonuclease HIII from Staphylococcus saprophyticus subsp. saprophyticus (strain ATCC 15305 / DSM 20229 / NCIMB 8711 / NCTC 7292 / S-41).